The sequence spans 337 residues: DNA-directed RNA polymerase subunit alpha (337 aa).

An alpha N-terminal domain (alpha-NTD) region spans residues Met-1 to Gln-233. The interval Ile-267–Phe-337 is alpha C-terminal domain (alpha-CTD).

It belongs to the RNA polymerase alpha chain family. In plastids the minimal PEP RNA polymerase catalytic core is composed of four subunits: alpha, beta, beta', and beta''. When a (nuclear-encoded) sigma factor is associated with the core the holoenzyme is formed, which can initiate transcription.

It localises to the plastid. The protein localises to the chloroplast. It carries out the reaction RNA(n) + a ribonucleoside 5'-triphosphate = RNA(n+1) + diphosphate. DNA-dependent RNA polymerase catalyzes the transcription of DNA into RNA using the four ribonucleoside triphosphates as substrates. The chain is DNA-directed RNA polymerase subunit alpha from Platanus occidentalis (Sycamore).